The sequence spans 718 residues: Ribonuclease J (718 aa).

The interval 1–130 is disordered; it reads MNDSRNRGRK…RGNRGGGRRN (130 aa). Composition is skewed to low complexity over residues 55–91 and 100–118; these read AAQGAQGSQDSQGSQNAQGSQNRESGNNNRNRSNNNR and SGNANEGANNNSGNQNRQG. Residues histidine 220, histidine 222, aspartate 224, histidine 225, histidine 287, and aspartate 309 each coordinate Zn(2+). 510–514 serves as a coordination point for substrate; that stretch reads HTSGH. Residue histidine 536 coordinates Zn(2+).

The protein belongs to the metallo-beta-lactamase superfamily. RNA-metabolizing metallo-beta-lactamase-like family. Bacterial RNase J subfamily. Homodimer, may be a subunit of the RNA degradosome. Zn(2+) serves as cofactor.

The protein localises to the cytoplasm. An RNase that has 5'-3' exonuclease and possibly endoonuclease activity. Involved in maturation of rRNA and in some organisms also mRNA maturation and/or decay. The sequence is that of Ribonuclease J from Corynebacterium glutamicum (strain ATCC 13032 / DSM 20300 / JCM 1318 / BCRC 11384 / CCUG 27702 / LMG 3730 / NBRC 12168 / NCIMB 10025 / NRRL B-2784 / 534).